Consider the following 86-residue polypeptide: Large ribosomal subunit protein bL31B (86 aa).

It belongs to the bacterial ribosomal protein bL31 family. Type B subfamily. In terms of assembly, part of the 50S ribosomal subunit.

The protein is Large ribosomal subunit protein bL31B of Burkholderia lata (strain ATCC 17760 / DSM 23089 / LMG 22485 / NCIMB 9086 / R18194 / 383).